The following is a 120-amino-acid chain: Urease subunit beta (120 aa).

Belongs to the urease beta subunit family. In terms of assembly, heterotrimer of UreA (gamma), UreB (beta) and UreC (alpha) subunits. Three heterotrimers associate to form the active enzyme.

The protein localises to the cytoplasm. It catalyses the reaction urea + 2 H2O + H(+) = hydrogencarbonate + 2 NH4(+). The protein operates within nitrogen metabolism; urea degradation; CO(2) and NH(3) from urea (urease route): step 1/1. This Corynebacterium efficiens (strain DSM 44549 / YS-314 / AJ 12310 / JCM 11189 / NBRC 100395) protein is Urease subunit beta.